An 80-amino-acid polypeptide reads, in one-letter code: Raniseptin-7 (80 aa).

Residues 1–22 (MAFLKKSLFLVLFLGIVSLSIC) form the signal peptide. Residues 23-49 (EEEKREGEEEEKQEEENEELSEEELRE) constitute a propeptide that is removed on maturation. A disordered region spans residues 27 to 46 (REGEEEEKQEEENEELSEEE). Positions 30 to 44 (EEEEKQEEENEELSE) are enriched in acidic residues.

It belongs to the frog skin active peptide (FSAP) family. Dermaseptin subfamily. In terms of tissue distribution, expressed by the skin glands.

It localises to the secreted. Functionally, has antibacterial activity. The polypeptide is Raniseptin-7 (Boana raniceps (Chaco tree frog)).